Reading from the N-terminus, the 417-residue chain is Phosphatidylcholine:ceramide cholinephosphotransferase 1 (417 aa).

In terms of domain architecture, SAM spans 11–74; sequence WSPEEVTNWL…LHMIETLKMA (64 aa). Transmembrane regions (helical) follow at residues 140–160, 188–208, 219–239, 280–300, and 308–328; these read FLAF…ISVV, FSIC…QWLL, FFCI…VTTL, MCGD…YLFI, and LWWY…CILL. His-289 is a catalytic residue. At 329-417 the chain is on the cytoplasmic side; sequence AHDHYTVDVV…VKYSRLVNDT (89 aa). Residues His-332 and Asp-336 contribute to the active site.

The protein belongs to the sphingomyelin synthase family.

Its subcellular location is the golgi apparatus membrane. The enzyme catalyses an N-acylsphing-4-enine + a 1,2-diacyl-sn-glycero-3-phosphocholine = a sphingomyelin + a 1,2-diacyl-sn-glycerol. The catalysed reaction is an N-acylsphing-4-enine + a 1,2-diacyl-sn-glycero-3-phosphoethanolamine = an N-acylsphing-4-enine 1-phosphoethanolamine + a 1,2-diacyl-sn-glycerol. In terms of biological role, major sphingomyelin synthase at the Golgi apparatus. Catalyzes the reversible transfer of phosphocholine moiety in sphingomyelin biosynthesis: in the forward reaction transfers phosphocholine head group of phosphatidylcholine (PC) on to ceramide (CER) to form ceramide phosphocholine (sphingomyelin, SM) and diacylglycerol (DAG) as by-product, and in the reverse reaction transfers phosphocholine from SM to DAG to form PC and CER. The direction of the reaction depends on the levels of CER and DAG in Golgi membranes. Converts the newly synthesized CER, that is transported from the endoplasmic reticulum to the trans-Golgi by the Cer transport protein (CERT), to SM. Can form a heteromeric complex with glucosylceramide synthase (GCS) increasing SMS activity and reducing glucosylceramide synthesis, a critical mechanism that controls the metabolic fate of CER in the Golgi. Does not use free phosphorylcholine or CDP-choline as donor. Can also transfer phosphoethanolamine head group of phosphatidylethanolamine (PE) on to CER to form ceramide phosphoethanolamine (CPE). Regulates receptor-mediated signal transduction via mitogenic DAG and proapoptotic CER, as well as via SM, a structural component of membrane rafts that serve as platforms for signal transduction and protein sorting. Plays a role in secretory transport via regulation of DAG pool at the Golgi apparatus and its downstream effects on PRKD1. The chain is Phosphatidylcholine:ceramide cholinephosphotransferase 1 (SGMS1) from Gallus gallus (Chicken).